Reading from the N-terminus, the 329-residue chain is Biotin synthase (329 aa).

In terms of domain architecture, Radical SAM core spans 48–278 (FVGDKVYLCS…SKKISVCGGR (231 aa)). Residues cysteine 66, cysteine 70, and cysteine 73 each contribute to the [4Fe-4S] cluster site. [2Fe-2S] cluster is bound by residues serine 143 and cysteine 203.

It belongs to the radical SAM superfamily. Biotin synthase family. In terms of assembly, homodimer. The cofactor is [4Fe-4S] cluster. It depends on [2Fe-2S] cluster as a cofactor.

It catalyses the reaction (4R,5S)-dethiobiotin + (sulfur carrier)-SH + 2 reduced [2Fe-2S]-[ferredoxin] + 2 S-adenosyl-L-methionine = (sulfur carrier)-H + biotin + 2 5'-deoxyadenosine + 2 L-methionine + 2 oxidized [2Fe-2S]-[ferredoxin]. It participates in cofactor biosynthesis; biotin biosynthesis; biotin from 7,8-diaminononanoate: step 2/2. Functionally, catalyzes the conversion of dethiobiotin (DTB) to biotin by the insertion of a sulfur atom into dethiobiotin via a radical-based mechanism. In Geotalea uraniireducens (strain Rf4) (Geobacter uraniireducens), this protein is Biotin synthase.